Reading from the N-terminus, the 1405-residue chain is Tonsoku-like protein (1405 aa).

7 TPR repeats span residues 23–56 (AVSCNQLGDFYNQQGKYTDAVREYVQEAQIYASM), 63–96 (AKAKRMVGEMYTLLCDYDAAKDHINDYLKIAKRL), 163–196 (ARCYLNIGVVKEHMEAFQESIEYIDKAIKISKTH), 203–237 (HLCYISMSLLYICKKNDATAALRFCNMALEVAKRF), 245–278 (CETLITKAEILIKAGDFASAKQILTKAYKKNTPD), 314–347 (KGLYEKLGDGCCHLMNYEKALTYYQKMLENAELN), and 355–388 (VPIYVSLYQTYRDNGQFDKALEYLWKEFELNQDA). The LRR 1 repeat unit spans residues 153–181 (ISKLEQLDMQARCYLNIGVVKEHMEAFQE). Residues 439 to 465 (MVRLRRLMLKHNMQVLVENLEADATAK) form an LRR 2 repeat. A disordered region spans residues 465-535 (KGIDLDQEES…RGNRTLVIKK (71 aa)). Positions 469–483 (LDQEESVGDDEEESD) are enriched in acidic residues. 3 ANK repeats span residues 538 to 567 (KGETQLHQACISGNLELVRRLIDQGHTVNV), 571 to 600 (AGWLPLHEACNHGYREIVELLLDKGAASAI), and 609 to 638 (DGITPLFDACSNGFLDVAELLLDRGADATV). 3 disordered regions span residues 695 to 753 (FNAK…KEYR), 806 to 827 (KRINSGDLSRRTSKENFQDTAL), and 841 to 880 (TPENEYSQRQKQMRKLTLSRSSSMSSNHSSSATSSRKKHQ). Residues Ser707 and Ser709 each carry the phosphoserine modification. Basic and acidic residues predominate over residues 813-822 (LSRRTSKENF). The segment covering 841–850 (TPENEYSQRQ) has biased composition (polar residues). Residues 859–874 (SRSSSMSSNHSSSATS) show a composition bias toward low complexity. Ser893, Ser895, Ser899, and Ser902 each carry phosphoserine. LRR repeat units lie at residues 1085–1108 (QARLTVLDLSCNFIGNEGCQQLAK), 1113–1137 (LLQLKALRLQCNAIGSHGLEALLCG), 1143–1166 (LELLEELNLNQNPLGNASVRILSK), 1186–1211 (LTELQDFDLGFNKLTRFDISFNQLTQ), 1287–1311 (AKQLQMLDISDNSNLSGTTLGYILD), and 1333–1357 (LQKLEQLKQLPRRLELTVDEQVFSM).

It belongs to the Tonsoku family.

The protein resides in the nucleus. It is found in the nucleoplasm. Its subcellular location is the chromosome. Its function is as follows. Histone reader involved in homologous recombination-mediated repair of double-strand breaks (DSBs) at stalled or collapsed replication forks. Specifically recognizes and binds histone H3.1. This chain is Tonsoku-like protein, found in Drosophila melanogaster (Fruit fly).